A 130-amino-acid chain; its full sequence is MAPSGRSKTASPLTGRSAVVPWGRLASHWSMTMSKEAGKGDNHGGGPGKIEIIVVVNGQPTQVEANPNQPLHVVRTKALENTQNVAQPAENWEFKDEAGTLLDADKKIGDFGFANTGTLFLSLKAGVAGA.

This is an uncharacterized protein from Sinorhizobium fredii (strain NBRC 101917 / NGR234).